The following is a 299-amino-acid chain: Bifunctional protein FolD (299 aa).

Residues Gly168 to Ser170, Ser193, and Ile234 contribute to the NADP(+) site.

The protein belongs to the tetrahydrofolate dehydrogenase/cyclohydrolase family. Homodimer.

It carries out the reaction (6R)-5,10-methylene-5,6,7,8-tetrahydrofolate + NADP(+) = (6R)-5,10-methenyltetrahydrofolate + NADPH. The catalysed reaction is (6R)-5,10-methenyltetrahydrofolate + H2O = (6R)-10-formyltetrahydrofolate + H(+). It participates in one-carbon metabolism; tetrahydrofolate interconversion. In terms of biological role, catalyzes the oxidation of 5,10-methylenetetrahydrofolate to 5,10-methenyltetrahydrofolate and then the hydrolysis of 5,10-methenyltetrahydrofolate to 10-formyltetrahydrofolate. This Brucella anthropi (strain ATCC 49188 / DSM 6882 / CCUG 24695 / JCM 21032 / LMG 3331 / NBRC 15819 / NCTC 12168 / Alc 37) (Ochrobactrum anthropi) protein is Bifunctional protein FolD.